Reading from the N-terminus, the 665-residue chain is GTPase IMAP family member 8 (665 aa).

An AIG1-type G 1 domain is found at 8–210 (MSELRLLLLG…HVNFKTEGSR (203 aa)). Residues 17–24 (GKCRSGKS) are G1. GTP is bound by residues 17–25 (GKCRSGKSA) and Ser-38. Positions 44 to 48 (TVIKM) are G2. The interval 65–68 (DTPD) is G3. A G4 region spans residues 134–137 (TRKD). Residues 135-137 (RKD) and Asn-170 each bind GTP. Positions 169–171 (NNK) are G5. The tract at residues 217 to 246 (EAASQEGDKPQGPRERQLQSTGPEQNPGTS) is disordered. The segment covering 222–233 (EGDKPQGPRERQ) has biased composition (basic and acidic residues). Polar residues predominate over residues 234 to 246 (LQSTGPEQNPGTS). AIG1-type G domains follow at residues 245–435 (TSEL…VFRE) and 436–644 (KETL…SKLI). Coiled coils occupy residues 400–427 (NYRATGEEEQRQADELLEKIESMVHQNG) and 608–657 (QAQE…EKLL).

Belongs to the TRAFAC class TrmE-Era-EngA-EngB-Septin-like GTPase superfamily. AIG1/Toc34/Toc159-like paraseptin GTPase family. IAN subfamily. In terms of tissue distribution, expressed in the spleen, intestine, liver, and colon, as well as in lung, placenta, kidney, muscle, and heart. Extremely low expression, if any, in brain, in thymus, bone marrow, and blood leukocytes. Detected in T-cells.

Its subcellular location is the endoplasmic reticulum. It is found in the golgi apparatus. It localises to the mitochondrion. The protein localises to the cytoplasm. The protein resides in the cytosol. Its function is as follows. Exerts an anti-apoptotic effect in the immune system and is involved in responses to infections. This Homo sapiens (Human) protein is GTPase IMAP family member 8 (GIMAP8).